A 524-amino-acid polypeptide reads, in one-letter code: Acetyl-CoA hydrolase (524 aa).

Residue glycine 275–isoleucine 279 coordinates CoA. Residue glutamate 300 is the 5-glutamyl coenzyme A thioester intermediate of the active site. The CoA site is built by asparagine 390 and glycine 394.

This sequence belongs to the acetyl-CoA hydrolase/transferase family.

Its subcellular location is the cytoplasm. The catalysed reaction is acetyl-CoA + H2O = acetate + CoA + H(+). In terms of biological role, presumably involved in regulating the intracellular acetyl-CoA pool for fatty acid and cholesterol synthesis and fatty acid oxidation. The sequence is that of Acetyl-CoA hydrolase (ACH1) from Candida albicans (strain SC5314 / ATCC MYA-2876) (Yeast).